The chain runs to 2028 residues: Protein Daple (2028 aa).

The Calponin-homology (CH) domain maps to 11–131 (LFLQSPLVTW…KVLLLVLGCA (121 aa)). The tract at residues 222 to 250 (AQHPPSPIKSSSADSTPSPTSSLSSEDKQ) is disordered. Residues Ser-227 and Ser-239 each carry the phosphoserine modification. Positions 229 to 245 (IKSSSADSTPSPTSSLS) are enriched in low complexity. 4 coiled-coil regions span residues 247 to 428 (EDKQ…SMNE), 456 to 1017 (ELNE…QGEG), 1045 to 1094 (HKEA…SSQI), and 1139 to 1393 (LQNH…DQYK). Position 486 is a phosphoserine (Ser-486). Over residues 1011-1024 (RQNQGEGQHLQNSF) the composition is skewed to polar residues. The tract at residues 1011 to 1043 (RQNQGEGQHLQNSFKHPAGKTAASHQGKEAWGP) is disordered. The span at 1419–1428 (KEGSRERLKS) shows a compositional bias: basic and acidic residues. 2 disordered regions span residues 1419–1724 (KEGS…GAKM) and 1736–1803 (AAPT…SLSR). Composition is skewed to low complexity over residues 1439–1450 (SSDPASPAASQP), 1517–1534 (SRTCSTSATTTAPSNSTP), and 1568–1588 (SRPSSLESSRNTSSNSSPLNL). The residue at position 1444 (Ser-1444) is a Phosphoserine. Over residues 1589-1604 (KGSSEQLHGRSESFSS) the composition is skewed to polar residues. At Ser-1601 the chain carries Phosphoserine. The GBA motif lies at 1661 to 1691 (CSASPSSEMVTLEEFLEESNRSSPTHDTPSC). Basic and acidic residues predominate over residues 1689-1704 (PSCRDDLLSDYFRKAS). Residues 1792 to 1803 (HAPASRSASLSR) are compositionally biased toward low complexity. Ser-1806 carries the phosphoserine modification. Residues 1816–2021 (SGPEACKQES…PEPGGDPQTV (206 aa)) form a disordered region. Polar residues predominate over residues 1842-1855 (SHTLQSPAPPSSHS). Residues 1879 to 1897 (RPLDTRRFSLAPPKEERLA) are compositionally biased toward basic and acidic residues. The segment covering 1902 to 1924 (SATAPAIATAGAGAAAAGSGSNS) has biased composition (low complexity). Phosphothreonine is present on Thr-1954. The PDZ-binding motif lies at 2025–2028 (YGCV). A DVL1-binding region spans residues 2026-2028 (GCV).

This sequence belongs to the CCDC88 family. Homooligomer. Interacts with DVL1 (via PDZ domain); dissociates following initiation of non-canonical Wnt signaling. Interacts (via C-terminus) with ligand-activated Wnt receptor FZD7; competes with DVL1 for binding to FZD7 and displaces DVL1 from ligand-activated FZD7. Interacts (via GBA motif) with guanine nucleotide-binding protein G(i) alpha subunits GNAI1, GNAI2 and GNAI3 (inactive GDP-bound form); interacts with higher affinity with GNAI1 and GNAI3 than with GNAI2 and interaction leads to G(i) alpha subunit activation. Does not interact with GNAO1.

Its subcellular location is the cytoplasm. It is found in the cell junction. Its function is as follows. Required for activation of guanine nucleotide-binding proteins (G-proteins) during non-canonical Wnt signaling. Binds to ligand-activated Wnt receptor FZD7, displacing DVL1 from the FZD7 receptor and leading to inhibition of canonical Wnt signaling. Acts as a non-receptor guanine nucleotide exchange factor by also binding to guanine nucleotide-binding protein G(i) alpha (Gi-alpha) subunits, leading to their activation. Binding to Gi-alpha subunits displaces the beta and gamma subunits from the heterotrimeric G-protein complex, triggering non-canonical Wnt responses such as activation of RAC1 and PI3K-AKT signaling. Promotes apical constriction of cells via ARHGEF18. In Homo sapiens (Human), this protein is Protein Daple (CCDC88C).